The following is a 299-amino-acid chain: Acetaldehyde dehydrogenase (299 aa).

11–14 is an NAD(+) binding site; that stretch reads SGNI. Residue cysteine 126 is the Acyl-thioester intermediate of the active site. Residues 157-165 and asparagine 267 contribute to the NAD(+) site; that span reads SAGPGTRAN.

The protein belongs to the acetaldehyde dehydrogenase family.

It carries out the reaction acetaldehyde + NAD(+) + CoA = acetyl-CoA + NADH + H(+). The polypeptide is Acetaldehyde dehydrogenase (Bacillus cereus (strain ATCC 10987 / NRS 248)).